A 572-amino-acid chain; its full sequence is Proline--tRNA ligase (572 aa).

The protein belongs to the class-II aminoacyl-tRNA synthetase family. ProS type 1 subfamily. In terms of assembly, homodimer.

Its subcellular location is the cytoplasm. It catalyses the reaction tRNA(Pro) + L-proline + ATP = L-prolyl-tRNA(Pro) + AMP + diphosphate. Catalyzes the attachment of proline to tRNA(Pro) in a two-step reaction: proline is first activated by ATP to form Pro-AMP and then transferred to the acceptor end of tRNA(Pro). As ProRS can inadvertently accommodate and process non-cognate amino acids such as alanine and cysteine, to avoid such errors it has two additional distinct editing activities against alanine. One activity is designated as 'pretransfer' editing and involves the tRNA(Pro)-independent hydrolysis of activated Ala-AMP. The other activity is designated 'posttransfer' editing and involves deacylation of mischarged Ala-tRNA(Pro). The misacylated Cys-tRNA(Pro) is not edited by ProRS. The sequence is that of Proline--tRNA ligase from Shigella dysenteriae serotype 1 (strain Sd197).